Reading from the N-terminus, the 592-residue chain is Nucleolar protein 58 (592 aa).

In terms of domain architecture, Nop spans 285–410 (IAPNLTALVG…LERKLAAMEG (126 aa)). Residues 443 to 592 (DADALSSDEP…QKKKKKKGEE (150 aa)) form a disordered region. Residues 450–462 (DEPKSKKDKKLIE) are compositionally biased toward basic and acidic residues. Over residues 463–478 (EVSDEEMADADSDEEP) the composition is skewed to acidic residues. Composition is skewed to basic and acidic residues over residues 505–515 (GKDAELEKLAE) and 557–571 (KKAS…KRSD). The span at 582-592 (KQKKKKKKGEE) shows a compositional bias: basic residues.

The protein belongs to the NOP5/NOP56 family.

The protein resides in the nucleus. It localises to the nucleolus. Required for pre-18S rRNA processing. May bind microtubules. The sequence is that of Nucleolar protein 58 (nop58) from Aspergillus clavatus (strain ATCC 1007 / CBS 513.65 / DSM 816 / NCTC 3887 / NRRL 1 / QM 1276 / 107).